The following is a 202-amino-acid chain: Imidazole glycerol phosphate synthase subunit HisH (202 aa).

The Glutamine amidotransferase type-1 domain occupies 3–202 (RIVIIDYGLG…KILRNFVEMC (200 aa)). Catalysis depends on C79, which acts as the Nucleophile. Active-site residues include H183 and E185.

Heterodimer of HisH and HisF.

The protein resides in the cytoplasm. The enzyme catalyses 5-[(5-phospho-1-deoxy-D-ribulos-1-ylimino)methylamino]-1-(5-phospho-beta-D-ribosyl)imidazole-4-carboxamide + L-glutamine = D-erythro-1-(imidazol-4-yl)glycerol 3-phosphate + 5-amino-1-(5-phospho-beta-D-ribosyl)imidazole-4-carboxamide + L-glutamate + H(+). It carries out the reaction L-glutamine + H2O = L-glutamate + NH4(+). It participates in amino-acid biosynthesis; L-histidine biosynthesis; L-histidine from 5-phospho-alpha-D-ribose 1-diphosphate: step 5/9. IGPS catalyzes the conversion of PRFAR and glutamine to IGP, AICAR and glutamate. The HisH subunit catalyzes the hydrolysis of glutamine to glutamate and ammonia as part of the synthesis of IGP and AICAR. The resulting ammonia molecule is channeled to the active site of HisF. The sequence is that of Imidazole glycerol phosphate synthase subunit HisH from Methanosarcina mazei (strain ATCC BAA-159 / DSM 3647 / Goe1 / Go1 / JCM 11833 / OCM 88) (Methanosarcina frisia).